We begin with the raw amino-acid sequence, 281 residues long: Very long chain fatty acid elongase 7 (281 aa).

Ala2 is modified (N-acetylalanine). Residues 2–27 are Lumenal-facing; it reads AFSDLTSRTVRLYDNWIKDADPRVED. Residues 28–48 traverse the membrane as a helical segment; it reads WLLMSSPLPQTIILGFYVYFV. At 49-66 the chain is on the cytoplasmic side; it reads TSLGPKLMENRKPFELKK. Residues 67 to 87 form a helical membrane-spanning segment; the sequence is VMITYNFSIVLFSVYMFYEFI. Topologically, residues 88 to 115 are lumenal; it reads MSGWGTGYSFRCDIVDYSQSPTALRMVR. A disulfide bridge connects residues Cys99 and Cys231. The chain crosses the membrane as a helical span at residues 116 to 136; it reads TCWLYYFSKFIELLDTIFFIL. 5 residues coordinate 3-oxoeicosanoyl-CoA: Lys124, Arg137, Lys139, Gln142, and His147. The Cytoplasmic portion of the chain corresponds to 137 to 142; the sequence is RKKNSQ. A helical transmembrane segment spans residues 143-162; it reads VTFLHVFHHTIMPWTWWFGV. The short motif at 147–151 is the HxxHH motif element; it reads HVFHH. Catalysis depends on His150, which acts as the Nucleophile. Residues 163 to 171 are Lumenal-facing; it reads KFAAGGLGT. The helical transmembrane segment at 172–194 threads the bilayer; it reads FHAFLNTAVHVVMYSYYGLCALG. Residues Tyr187, Lys204, Thr208, and Gln211 each coordinate 3-oxoeicosanoyl-CoA. Residues 195-206 are Cytoplasmic-facing; it reads PDYQKYLWWKKY. The helical transmembrane segment at 207 to 227 threads the bilayer; that stretch reads LTSLQLIQFVLITIHISQFFF. The Lumenal segment spans residues 228 to 236; it reads MEDCKYQFP. A helical membrane pass occupies residues 237 to 257; it reads VFQYIIMSYGCIFLLLFLHFW. Topologically, residues 258–281 are cytoplasmic; that stretch reads YRAYTKGQRLPKTVKHGICKNKDH. Arg266 contacts 3-oxoeicosanoyl-CoA. The Di-lysine motif signature appears at 277-281; sequence KNKDH.

The protein belongs to the ELO family. ELOVL7 subfamily. Homodimer. Interacts with TECR.

It localises to the endoplasmic reticulum membrane. The enzyme catalyses a very-long-chain acyl-CoA + malonyl-CoA + H(+) = a very-long-chain 3-oxoacyl-CoA + CO2 + CoA. It carries out the reaction eicosanoyl-CoA + malonyl-CoA + H(+) = 3-oxodocosanoyl-CoA + CO2 + CoA. It catalyses the reaction (5Z,8Z,11Z,14Z)-eicosatetraenoyl-CoA + malonyl-CoA + H(+) = (7Z,10Z,13Z,16Z)-3-oxodocosatetraenoyl-CoA + CO2 + CoA. The catalysed reaction is (6Z,9Z,12Z)-octadecatrienoyl-CoA + malonyl-CoA + H(+) = (8Z,11Z,14Z)-3-oxoeicosatrienoyl-CoA + CO2 + CoA. The enzyme catalyses (9Z,12Z)-octadecadienoyl-CoA + malonyl-CoA + H(+) = (11Z,14Z)-3-oxoicosa-11,14-dienoyl-CoA + CO2 + CoA. It carries out the reaction (9Z)-octadecenoyl-CoA + malonyl-CoA + H(+) = 3-oxo-(11Z)-eicosenoyl-CoA + CO2 + CoA. It catalyses the reaction octadecanoyl-CoA + malonyl-CoA + H(+) = 3-oxoeicosanoyl-CoA + CO2 + CoA. The catalysed reaction is hexadecanoyl-CoA + malonyl-CoA + H(+) = 3-oxooctadecanoyl-CoA + CO2 + CoA. The enzyme catalyses (9Z,12Z,15Z)-octadecatrienoyl-CoA + malonyl-CoA + H(+) = (11Z,14Z,17Z)-3-oxoeicosatrienoyl-CoA + CO2 + CoA. The protein operates within lipid metabolism; fatty acid biosynthesis. Catalyzes the first and rate-limiting reaction of the four reactions that constitute the long-chain fatty acids elongation cycle. This endoplasmic reticulum-bound enzymatic process allows the addition of 2 carbons to the chain of long- and very long-chain fatty acids (VLCFAs) per cycle. Condensing enzyme with higher activity toward C18 acyl-CoAs, especially C18:3(n-3) acyl-CoAs and C18:3(n-6)-CoAs. Also active toward C20:4-, C18:0-, C18:1-, C18:2- and C16:0-CoAs, and weakly toward C20:0-CoA. Little or no activity toward C22:0-, C24:0-, or C26:0-CoAs. May participate in the production of saturated and polyunsaturated VLCFAs of different chain lengths that are involved in multiple biological processes as precursors of membrane lipids and lipid mediators. This chain is Very long chain fatty acid elongase 7, found in Bos taurus (Bovine).